Reading from the N-terminus, the 452-residue chain is Pup--protein ligase (452 aa).

Glu9 contributes to the Mg(2+) binding site. An ATP-binding site is contributed by Arg53. Tyr55 contacts Mg(2+). Asp57 (proton acceptor) is an active-site residue. A Mg(2+)-binding site is contributed by Glu63. 2 residues coordinate ATP: Thr66 and Trp419.

It belongs to the Pup ligase/Pup deamidase family. Pup-conjugating enzyme subfamily.

It carries out the reaction ATP + [prokaryotic ubiquitin-like protein]-L-glutamate + [protein]-L-lysine = ADP + phosphate + N(6)-([prokaryotic ubiquitin-like protein]-gamma-L-glutamyl)-[protein]-L-lysine.. Its pathway is protein degradation; proteasomal Pup-dependent pathway. The protein operates within protein modification; protein pupylation. Catalyzes the covalent attachment of the prokaryotic ubiquitin-like protein modifier Pup to the proteasomal substrate proteins, thereby targeting them for proteasomal degradation. This tagging system is termed pupylation. The ligation reaction involves the side-chain carboxylate of the C-terminal glutamate of Pup and the side-chain amino group of a substrate lysine. The sequence is that of Pup--protein ligase from Streptosporangium roseum (strain ATCC 12428 / DSM 43021 / JCM 3005 / KCTC 9067 / NCIMB 10171 / NRRL 2505 / NI 9100).